A 109-amino-acid chain; its full sequence is Nucleoid-associated protein ASA_2087 (109 aa).

Disordered stretches follow at residues 1-23 (MFGK…RMQK) and 87-109 (QSKS…KLPF). The span at 11-23 (MKQAQQMQERMQK) shows a compositional bias: low complexity.

It belongs to the YbaB/EbfC family. As to quaternary structure, homodimer.

It localises to the cytoplasm. The protein resides in the nucleoid. In terms of biological role, binds to DNA and alters its conformation. May be involved in regulation of gene expression, nucleoid organization and DNA protection. The chain is Nucleoid-associated protein ASA_2087 from Aeromonas salmonicida (strain A449).